Reading from the N-terminus, the 530-residue chain is Chaperone Ric-8A (530 aa).

At Ser-435 the chain carries Phosphoserine. Thr-440 and Thr-442 each carry phosphothreonine. Phosphoserine occurs at positions 501, 522, 523, and 527.

Belongs to the synembryn family. As to quaternary structure, interacts with GDP-bound G alpha proteins GNAI1, GNAO1 and GNAQ, and with GNA13 with lower affinity. Does not interact with G-alpha proteins when they are in complex with subunits beta and gamma. Interacts (via C-terminus) with RGS14; the interaction stimulates the dissociation of the complex between RGS14 and the active GTP-bound form of GNAI1. Interacts with NCS1; interaction is favored in the absence of Ca(2+) and myristoylation of NCS1 is not required. Post-translationally, phosphorylated at Ser-435 and Thr-440 by CK2, stabilizing its interface with G alpha proteins.

It localises to the cytoplasm. The protein localises to the cell cortex. Its function is as follows. Chaperone that specifically binds and folds nascent G alpha proteins prior to G protein heterotrimer formation, promoting their stability and activity: folds GNAI1, GNAO1, GNA13 and GNAQ. Does not fold G(s) G-alpha proteins GNAS nor GNAL. Also acts as a guanine nucleotide exchange factor (GEF) for G alpha proteins by stimulating exchange of bound GDP for free GTP. Involved in regulation of microtubule pulling forces during mitotic movement of chromosomes by stimulating G(i)-alpha protein (GNAI1), possibly leading to release G(i)-alpha-GTP and NuMA proteins from the NuMA-GPSM2-G(i)-alpha-GDP complex. Also acts as an activator for G(q)-alpha (GNAQ) protein by enhancing the G(q)-coupled receptor-mediated ERK activation. In Pongo abelii (Sumatran orangutan), this protein is Chaperone Ric-8A (RIC8A).